The sequence spans 282 residues: HTH-type transcriptional activator RhaR (282 aa).

Residues 179-277 (DKLITALANS…GMTPSQWRHL (99 aa)) enclose the HTH araC/xylS-type domain. 2 DNA-binding regions (H-T-H motif) span residues 196 to 217 (DAFCQQEQCSERVLRQQFRAQT) and 244 to 267 (ISEISMQCGFEDSNYFSVVFTRET).

Binds DNA as a dimer.

It is found in the cytoplasm. Activates expression of the rhaSR operon in response to L-rhamnose. This chain is HTH-type transcriptional activator RhaR, found in Salmonella dublin (strain CT_02021853).